We begin with the raw amino-acid sequence, 619 residues long: Guanylate cyclase soluble subunit beta-1 (619 aa).

A heme-binding site is contributed by H105. In terms of domain architecture, Guanylate cyclase spans 421–554; sequence TILFSGIVGF…NTVNLTSRTE (134 aa).

It belongs to the adenylyl cyclase class-4/guanylyl cyclase family. In terms of assembly, the active enzyme is formed by a heterodimer of an alpha and a beta subunit. Heterodimer with GUCY1A1. Can also form inactive homodimers in vitro. The cofactor is heme. Lung and brain.

It is found in the cytoplasm. It catalyses the reaction GTP = 3',5'-cyclic GMP + diphosphate. Its activity is regulated as follows. Activated by nitric oxide in the presence of magnesium or manganese ions, binding of NO to the heme iron increases catalytic activity up to 400 folds. Functionally, mediates responses to nitric oxide (NO) by catalyzing the biosynthesis of the signaling molecule cGMP. This Bos taurus (Bovine) protein is Guanylate cyclase soluble subunit beta-1 (GUCY1B1).